A 407-amino-acid polypeptide reads, in one-letter code: Elongation factor Tu (407 aa).

Positions 10-217 (KPHVNVGTIG…ALDSYIPEPE (208 aa)) constitute a tr-type G domain. The interval 19-26 (GHVDHGKT) is G1. 19–26 (GHVDHGKT) is a GTP binding site. Threonine 26 contributes to the Mg(2+) binding site. The interval 60–64 (GITIA) is G2. Residues 81–84 (DCPG) form a G3 region. GTP is bound by residues 81 to 85 (DCPGH) and 136 to 139 (NKAD). Positions 136 to 139 (NKAD) are G4. Residues 184–186 (SAL) are G5.

This sequence belongs to the TRAFAC class translation factor GTPase superfamily. Classic translation factor GTPase family. EF-Tu/EF-1A subfamily. Monomer.

The protein localises to the cytoplasm. It carries out the reaction GTP + H2O = GDP + phosphate + H(+). Functionally, GTP hydrolase that promotes the GTP-dependent binding of aminoacyl-tRNA to the A-site of ribosomes during protein biosynthesis. In Saccharophagus degradans (strain 2-40 / ATCC 43961 / DSM 17024), this protein is Elongation factor Tu.